The primary structure comprises 316 residues: Coiled-coil domain-containing protein 130 homolog (316 aa).

Residues 182–203 (ANSRLRAEFRQQKKEINGQQEL) adopt a coiled-coil conformation. Residues 287-316 (KLEETTSSATNEKPISLVGDYSSSDNDSNG) form a disordered region.

Belongs to the CWC16 family.

The sequence is that of Coiled-coil domain-containing protein 130 homolog from Drosophila melanogaster (Fruit fly).